We begin with the raw amino-acid sequence, 398 residues long: ATP-dependent RNA helicase eIF4A (398 aa).

A Q motif motif is present at residues 25-53 (DSFDTMNLKPELLRGVYAYGFERPSAIQQ). The 171-residue stretch at 56–226 (IMPVIKGHDV…TKFMRDPVRI (171 aa)) folds into the Helicase ATP-binding domain. ATP is bound at residue 69–76 (AQSGTGKT). The DEAD box signature appears at 174–177 (DEAD). The Helicase C-terminal domain maps to 237–398 (GIKQFYIAVE…EMPMNVADLI (162 aa)).

It belongs to the DEAD box helicase family. eIF4A subfamily. As to quaternary structure, component of the eIF4F complex, which composition varies with external and internal environmental conditions. It is composed of at least eIF4A, eIF4E and eIF4G.

It localises to the cytoplasm. The catalysed reaction is ATP + H2O = ADP + phosphate + H(+). Functionally, ATP-dependent RNA helicase which is a subunit of the eIF4F complex involved in cap recognition and is required for mRNA binding to ribosome. In the current model of translation initiation, eIF4A unwinds RNA secondary structures in the 5'-UTR of mRNAs which is necessary to allow efficient binding of the small ribosomal subunit, and subsequent scanning for the initiator codon. The polypeptide is ATP-dependent RNA helicase eIF4A (tif1) (Sclerotinia sclerotiorum (strain ATCC 18683 / 1980 / Ss-1) (White mold)).